The chain runs to 534 residues: Cytochrome c oxidase subunit 1 (534 aa).

The helical transmembrane segment at V16 to I36 threads the bilayer. The Ca(2+) site is built by E39 and G44. Residue H62 coordinates Fe(II)-heme a. The next 6 membrane-spanning stretches (helical) occupy residues I64–L84, I101–S121, A147–V167, P183–L203, L235–I255, and V267–V287. H241 contributes to the Cu cation binding site. A cross-link (1'-histidyl-3'-tyrosine (His-Tyr)) is located at residues H241 to Y245. Residue Y245 coordinates O2. The Cu cation site is built by H290 and H291. The next 2 helical transmembrane spans lie at M310–G330 and M338–L358. Positions 368 and 369 each coordinate Mg(2+). The next 2 helical transmembrane spans lie at Y372–G392 and F414–N434. H376 lines the heme a3 pocket. Residue H378 coordinates Fe(II)-heme a. Ca(2+) is bound at residue P441. The helical transmembrane segment at V453–F473 threads the bilayer.

It belongs to the heme-copper respiratory oxidase family. In terms of assembly, component of the cytochrome c oxidase (complex IV, CIV), a multisubunit enzyme composed of a catalytic core of 3 subunits and several supernumerary subunits. The complex exists as a monomer or a dimer and forms supercomplexes (SCs) in the inner mitochondrial membrane with ubiquinol-cytochrome c oxidoreductase (cytochrome b-c1 complex, complex III, CIII). It depends on heme as a cofactor. Requires Cu cation as cofactor.

Its subcellular location is the mitochondrion inner membrane. The enzyme catalyses 4 Fe(II)-[cytochrome c] + O2 + 8 H(+)(in) = 4 Fe(III)-[cytochrome c] + 2 H2O + 4 H(+)(out). Its pathway is energy metabolism; oxidative phosphorylation. Functionally, component of the cytochrome c oxidase, the last enzyme in the mitochondrial electron transport chain which drives oxidative phosphorylation. The respiratory chain contains 3 multisubunit complexes succinate dehydrogenase (complex II, CII), ubiquinol-cytochrome c oxidoreductase (cytochrome b-c1 complex, complex III, CIII) and cytochrome c oxidase (complex IV, CIV), that cooperate to transfer electrons derived from NADH and succinate to molecular oxygen, creating an electrochemical gradient over the inner membrane that drives transmembrane transport and the ATP synthase. Cytochrome c oxidase is the component of the respiratory chain that catalyzes the reduction of oxygen to water. Electrons originating from reduced cytochrome c in the intermembrane space (IMS) are transferred via the dinuclear copper A center (CU(A)) of subunit 2 and heme A of subunit 1 to the active site in subunit 1, a binuclear center (BNC) formed by heme A3 and copper B (CU(B)). The BNC reduces molecular oxygen to 2 water molecules using 4 electrons from cytochrome c in the IMS and 4 protons from the mitochondrial matrix. The polypeptide is Cytochrome c oxidase subunit 1 (COX1) (Vanderwaltozyma polyspora (strain ATCC 22028 / DSM 70294 / BCRC 21397 / CBS 2163 / NBRC 10782 / NRRL Y-8283 / UCD 57-17) (Kluyveromyces polysporus)).